The sequence spans 282 residues: Probable aquaporin PIP2-6 (282 aa).

The next 2 membrane-spanning stretches (helical) occupy residues 39 to 59 and 76 to 96; these read ALIAEFIATLLFLYITVATVI and LGIAWAFGGMIFILVYCTAGI. An NPA 1 motif is present at residues 102–104; the sequence is NPA. Helical transmembrane passes span 121 to 141, 163 to 183, and 197 to 217; these read VMYIVAQCLGGIVGVGIVKGI, GTALGAEIIGTFVLVYTVFSA, and VLAPLPIGFAVFMVHLATIPI. The NPA 2 signature appears at 223-225; the sequence is NPA. Residues 245–265 form a helical membrane-spanning segment; it reads IFWAGPFIGALAAAAYHQYIL.

It belongs to the MIP/aquaporin (TC 1.A.8) family. PIP (TC 1.A.8.11) subfamily. In terms of tissue distribution, expressed in roots and leaves.

The protein resides in the cell membrane. In terms of biological role, aquaporins facilitate the transport of water and small neutral solutes across cell membranes. The protein is Probable aquaporin PIP2-6 (PIP2-6) of Oryza sativa subsp. japonica (Rice).